A 194-amino-acid polypeptide reads, in one-letter code: Large ribosomal subunit protein bL9 (194 aa).

The segment at 167-194 (EDRAAEAEAASDMAAGGAGSFEGDHYES) is disordered.

It belongs to the bacterial ribosomal protein bL9 family.

Functionally, binds to the 23S rRNA. This chain is Large ribosomal subunit protein bL9, found in Caulobacter sp. (strain K31).